The primary structure comprises 2325 residues: Serine/threonine-protein kinase MEC1 (2325 aa).

The 524-residue stretch at 1363–1886 folds into the FAT domain; the sequence is LLTTRSAECD…VWYIFSHARS (524 aa). The PI3K/PI4K catalytic domain maps to 1993–2309; that stretch reads FDDNVNIFFS…QVDVLIQEAT (317 aa). Residues 1999–2005 form a G-loop region; sequence IFFSLQM. A catalytic loop region spans residues 2174–2182; it reads GLGDRHCEN. The activation loop stretch occupies residues 2194–2218; the sequence is HIDFDCLFEKGTTLPTPEIVPFRLT. The region spanning 2293 to 2325 is the FATC domain; that stretch reads LPMNIHGQVDVLIQEATSLERLSQMYAGWAAYM.

Belongs to the PI3/PI4-kinase family. ATM subfamily.

It localises to the nucleus. It carries out the reaction L-seryl-[protein] + ATP = O-phospho-L-seryl-[protein] + ADP + H(+). The catalysed reaction is L-threonyl-[protein] + ATP = O-phospho-L-threonyl-[protein] + ADP + H(+). Its function is as follows. Serine/threonine protein kinase which activates checkpoint signaling upon genotoxic stresses such as ionizing radiation (IR), ultraviolet light (UV), or DNA replication stalling, thereby acting as a DNA damage sensor. Recognizes the substrate consensus sequence [ST]-Q. Recruited to DNA lesions in order to initiate the DNA repair by homologous recombination. Phosphorylates histone H2A to form H2AS128ph (gamma-H2A) at sites of DNA damage, also involved in the regulation of DNA damage response mechanism. Required for cell growth and meiotic recombination. This Candida albicans (strain SC5314 / ATCC MYA-2876) (Yeast) protein is Serine/threonine-protein kinase MEC1 (MEC1).